The chain runs to 164 residues: ATP synthase subunit b (164 aa).

A helical membrane pass occupies residues Ala-10–Leu-32.

It belongs to the ATPase B chain family. As to quaternary structure, F-type ATPases have 2 components, F(1) - the catalytic core - and F(0) - the membrane proton channel. F(1) has five subunits: alpha(3), beta(3), gamma(1), delta(1), epsilon(1). F(0) has three main subunits: a(1), b(2) and c(10-14). The alpha and beta chains form an alternating ring which encloses part of the gamma chain. F(1) is attached to F(0) by a central stalk formed by the gamma and epsilon chains, while a peripheral stalk is formed by the delta and b chains.

Its subcellular location is the cell inner membrane. F(1)F(0) ATP synthase produces ATP from ADP in the presence of a proton or sodium gradient. F-type ATPases consist of two structural domains, F(1) containing the extramembraneous catalytic core and F(0) containing the membrane proton channel, linked together by a central stalk and a peripheral stalk. During catalysis, ATP synthesis in the catalytic domain of F(1) is coupled via a rotary mechanism of the central stalk subunits to proton translocation. Its function is as follows. Component of the F(0) channel, it forms part of the peripheral stalk, linking F(1) to F(0). In Gluconacetobacter diazotrophicus (strain ATCC 49037 / DSM 5601 / CCUG 37298 / CIP 103539 / LMG 7603 / PAl5), this protein is ATP synthase subunit b.